A 458-amino-acid chain; its full sequence is Cysteine--tRNA ligase (458 aa).

Position 27 (Cys-27) interacts with Zn(2+). Residues 29 to 39 (ITPQSEPHIGH) carry the 'HIGH' region motif. Residues Cys-207, His-232, and Glu-236 each contribute to the Zn(2+) site. The 'KMSKS' region signature appears at 265 to 269 (KMSKS). An ATP-binding site is contributed by Lys-268.

This sequence belongs to the class-I aminoacyl-tRNA synthetase family. In terms of assembly, monomer. Zn(2+) serves as cofactor.

Its subcellular location is the cytoplasm. It carries out the reaction tRNA(Cys) + L-cysteine + ATP = L-cysteinyl-tRNA(Cys) + AMP + diphosphate. The protein is Cysteine--tRNA ligase of Dehalococcoides mccartyi (strain ATCC BAA-2266 / KCTC 15142 / 195) (Dehalococcoides ethenogenes (strain 195)).